A 177-amino-acid chain; its full sequence is Antigen TpF1 (177 aa).

This sequence belongs to the Dps family. As to quaternary structure, homodecamer; either linked or stabilized by disulfide bonds.

In terms of biological role, may play an important structural role in the outer membrane. In Treponema pallidum (strain Nichols), this protein is Antigen TpF1 (tpf1).